Consider the following 429-residue polypeptide: Mannose-6-phosphate isomerase (429 aa).

Serine 2 carries the N-acetylserine modification. Serine 107 is subject to Phosphoserine. Zn(2+)-binding residues include glutamine 109, histidine 111, glutamate 136, and histidine 281. Arginine 300 is a catalytic residue.

This sequence belongs to the mannose-6-phosphate isomerase type 1 family. Monomer. The cofactor is Zn(2+).

The protein localises to the cytoplasm. The catalysed reaction is D-mannose 6-phosphate = D-fructose 6-phosphate. Its pathway is nucleotide-sugar biosynthesis; GDP-alpha-D-mannose biosynthesis; alpha-D-mannose 1-phosphate from D-fructose 6-phosphate: step 1/2. Its activity is regulated as follows. Can be inhibited by an excess of zinc. Involved in the synthesis of the GDP-mannose and dolichol-phosphate-mannose required for a number of critical mannosyl transfer reactions. The sequence is that of Mannose-6-phosphate isomerase (PMI40) from Saccharomyces cerevisiae (strain ATCC 204508 / S288c) (Baker's yeast).